The following is a 387-amino-acid chain: Aminodeoxyfutalosine deaminase (387 aa).

Positions 1-10 (MRPAYDDPRT) are enriched in basic and acidic residues. A disordered region spans residues 1 to 37 (MRPAYDDPRTTDQPITRARPPPRAARGRRLGEEPLTE). The Zn(2+) site is built by His61 and His63. Residues Arg116, Asp183, and Gly217 each coordinate substrate. A Zn(2+)-binding site is contributed by His244. Catalysis depends on Glu247, which acts as the Proton donor. Residue Asp325 participates in Zn(2+) binding.

This sequence belongs to the metallo-dependent hydrolases superfamily. Adenosine and AMP deaminases family. It depends on Zn(2+) as a cofactor.

It catalyses the reaction 6-amino-6-deoxyfutalosine + H2O + H(+) = futalosine + NH4(+). Its pathway is quinol/quinone metabolism; menaquinone biosynthesis. Catalyzes the deamination of aminodeoxyfutalosine (AFL) into futalosine (FL), a step in the biosynthesis of menaquinone (MK, vitamin K2). This Streptomyces coelicolor (strain ATCC BAA-471 / A3(2) / M145) protein is Aminodeoxyfutalosine deaminase.